A 218-amino-acid chain; its full sequence is Protein-lysine N-methyltransferase M142.8 (218 aa).

It belongs to the class I-like SAM-binding methyltransferase superfamily. EFM5 family.

Its subcellular location is the cytoplasm. Functionally, S-adenosyl-L-methionine-dependent protein-lysine N-methyltransferase that methylates elongation factor 1-alpha. The protein is Protein-lysine N-methyltransferase M142.8 of Caenorhabditis elegans.